The chain runs to 189 residues: Elongation factor P (189 aa).

At K35 the chain carries N6-(3,6-diaminohexanoyl)-5-hydroxylysine.

Belongs to the elongation factor P family. In terms of processing, may be beta-lysylated on the epsilon-amino group of Lys-35 by the combined action of EpmA and EpmB, and then hydroxylated on the C5 position of the same residue by EpmC (if this protein is present). Lysylation is critical for the stimulatory effect of EF-P on peptide-bond formation. The lysylation moiety may extend toward the peptidyltransferase center and stabilize the terminal 3-CCA end of the tRNA. Hydroxylation of the C5 position on Lys-35 may allow additional potential stabilizing hydrogen-bond interactions with the P-tRNA.

It localises to the cytoplasm. It participates in protein biosynthesis; polypeptide chain elongation. Involved in peptide bond synthesis. Alleviates ribosome stalling that occurs when 3 or more consecutive Pro residues or the sequence PPG is present in a protein, possibly by augmenting the peptidyl transferase activity of the ribosome. Modification of Lys-35 is required for alleviation. The sequence is that of Elongation factor P from Wigglesworthia glossinidia brevipalpis.